The following is a 215-amino-acid chain: Dual specificity phosphatase 29 (215 aa).

In terms of domain architecture, Tyrosine-protein phosphatase spans 53–201 (HVNEVWPRLH…LRELDKQLVK (149 aa)). Residue 145-152 (HCAMGRSR) participates in substrate binding. Residue Cys146 is the Phosphocysteine intermediate of the active site.

This sequence belongs to the protein-tyrosine phosphatase family. Non-receptor class dual specificity subfamily. As to quaternary structure, homodimer. Interacts with PRKAA2.

It localises to the cytoplasm. Its subcellular location is the nucleus. It catalyses the reaction O-phospho-L-tyrosyl-[protein] + H2O = L-tyrosyl-[protein] + phosphate. The enzyme catalyses O-phospho-L-seryl-[protein] + H2O = L-seryl-[protein] + phosphate. The catalysed reaction is O-phospho-L-threonyl-[protein] + H2O = L-threonyl-[protein] + phosphate. Its function is as follows. Dual specificity phosphatase able to dephosphorylate phosphotyrosine, phosphoserine and phosphothreonine residues within the same substrate, with a preference for phosphotyrosine as a substrate. Involved in the modulation of intracellular signaling cascades. In skeletal muscle regulates systemic glucose homeostasis by activating, AMPK, an energy sensor protein kinase. Affects MAP kinase signaling though modulation of the MAPK1/2 cascade in skeletal muscle promoting muscle cell differentiation, development and atrophy. This Rattus norvegicus (Rat) protein is Dual specificity phosphatase 29 (Dusp29).